Here is a 208-residue protein sequence, read N- to C-terminus: Large ribosomal subunit protein uL4 (208 aa).

Residues 45-83 are disordered; sequence RQGTHKSKTRAEVRGGGRKPYRQKGTGNARQGSTRSPLM. The segment covering 69–80 has biased composition (polar residues); it reads GTGNARQGSTRS.

It belongs to the universal ribosomal protein uL4 family. Part of the 50S ribosomal subunit.

One of the primary rRNA binding proteins, this protein initially binds near the 5'-end of the 23S rRNA. It is important during the early stages of 50S assembly. It makes multiple contacts with different domains of the 23S rRNA in the assembled 50S subunit and ribosome. Functionally, forms part of the polypeptide exit tunnel. The polypeptide is Large ribosomal subunit protein uL4 (Chlorobium luteolum (strain DSM 273 / BCRC 81028 / 2530) (Pelodictyon luteolum)).